Consider the following 142-residue polypeptide: Large ribosomal subunit protein uL11 (142 aa).

It belongs to the universal ribosomal protein uL11 family. As to quaternary structure, part of the ribosomal stalk of the 50S ribosomal subunit. Interacts with L10 and the large rRNA to form the base of the stalk. L10 forms an elongated spine to which L12 dimers bind in a sequential fashion forming a multimeric L10(L12)X complex. In terms of processing, one or more lysine residues are methylated.

In terms of biological role, forms part of the ribosomal stalk which helps the ribosome interact with GTP-bound translation factors. The protein is Large ribosomal subunit protein uL11 of Yersinia pestis bv. Antiqua (strain Angola).